An 804-amino-acid polypeptide reads, in one-letter code: Leucine--tRNA ligase (804 aa).

The 'HIGH' region motif lies at 40 to 51 (PYPSGAGLHVGH). Residues 576–580 (KMSKS) carry the 'KMSKS' region motif. An ATP-binding site is contributed by lysine 579.

This sequence belongs to the class-I aminoacyl-tRNA synthetase family.

Its subcellular location is the cytoplasm. It catalyses the reaction tRNA(Leu) + L-leucine + ATP = L-leucyl-tRNA(Leu) + AMP + diphosphate. This chain is Leucine--tRNA ligase, found in Bacillus licheniformis (strain ATCC 14580 / DSM 13 / JCM 2505 / CCUG 7422 / NBRC 12200 / NCIMB 9375 / NCTC 10341 / NRRL NRS-1264 / Gibson 46).